Consider the following 508-residue polypeptide: Photosystem II CP47 reaction center protein (508 aa).

6 helical membrane-spanning segments follow: residues 21–36, 101–115, 140–156, 203–218, 237–252, and 457–472; these read SVHI…WAGS, IVFS…IWHW, GIHL…FGAF, IAAG…FHLS, VLSS…AFVV, and SFAL…HGAR.

This sequence belongs to the PsbB/PsbC family. PsbB subfamily. In terms of assembly, PSII is composed of 1 copy each of membrane proteins PsbA, PsbB, PsbC, PsbD, PsbE, PsbF, PsbH, PsbI, PsbJ, PsbK, PsbL, PsbM, PsbT, PsbX, PsbY, PsbZ, Psb30/Ycf12, at least 3 peripheral proteins of the oxygen-evolving complex and a large number of cofactors. It forms dimeric complexes. Binds multiple chlorophylls. PSII binds additional chlorophylls, carotenoids and specific lipids. serves as cofactor.

The protein localises to the plastid. Its subcellular location is the chloroplast thylakoid membrane. Functionally, one of the components of the core complex of photosystem II (PSII). It binds chlorophyll and helps catalyze the primary light-induced photochemical processes of PSII. PSII is a light-driven water:plastoquinone oxidoreductase, using light energy to abstract electrons from H(2)O, generating O(2) and a proton gradient subsequently used for ATP formation. The sequence is that of Photosystem II CP47 reaction center protein from Arabis hirsuta (Hairy rock-cress).